Reading from the N-terminus, the 676-residue chain is DNA ligase (676 aa).

NAD(+) contacts are provided by residues 42–46 (DDVYD), 91–92 (SL), and Glu-121. Lys-123 functions as the N6-AMP-lysine intermediate in the catalytic mechanism. The NAD(+) site is built by Arg-144, Glu-178, Lys-294, and Lys-318. Residues Cys-412, Cys-415, Cys-430, and Cys-435 each contribute to the Zn(2+) site. Residues 596–676 (NSTSEFTGKR…QLQAAMDETK (81 aa)) enclose the BRCT domain.

The protein belongs to the NAD-dependent DNA ligase family. LigA subfamily. Requires Mg(2+) as cofactor. The cofactor is Mn(2+).

The catalysed reaction is NAD(+) + (deoxyribonucleotide)n-3'-hydroxyl + 5'-phospho-(deoxyribonucleotide)m = (deoxyribonucleotide)n+m + AMP + beta-nicotinamide D-nucleotide.. Its function is as follows. DNA ligase that catalyzes the formation of phosphodiester linkages between 5'-phosphoryl and 3'-hydroxyl groups in double-stranded DNA using NAD as a coenzyme and as the energy source for the reaction. It is essential for DNA replication and repair of damaged DNA. In Levilactobacillus brevis (strain ATCC 367 / BCRC 12310 / CIP 105137 / JCM 1170 / LMG 11437 / NCIMB 947 / NCTC 947) (Lactobacillus brevis), this protein is DNA ligase.